Consider the following 441-residue polypeptide: Cysteine--tRNA ligase (441 aa).

C24 serves as a coordination point for Zn(2+). A 'HIGH' region motif is present at residues 26-36 (PTVYNYIHIGN). The Zn(2+) site is built by C204, H230, and E234. A 'KMSKS' region motif is present at residues 262 to 266 (KMSKS). K265 is a binding site for ATP.

It belongs to the class-I aminoacyl-tRNA synthetase family. As to quaternary structure, monomer. Zn(2+) serves as cofactor.

The protein localises to the cytoplasm. It catalyses the reaction tRNA(Cys) + L-cysteine + ATP = L-cysteinyl-tRNA(Cys) + AMP + diphosphate. This is Cysteine--tRNA ligase from Mycoplasma mycoides subsp. mycoides SC (strain CCUG 32753 / NCTC 10114 / PG1).